The chain runs to 245 residues: MLIPALDLIDGKVVRLYQGDFAQKTEFDLTPLGQAQLYAQAGAEWLHLVDLDGAKDPDKRQQKLLAKLASDSGMKCQAGGGIRTTEDLEALFDAGIERAVIGSTAVNQPDTVKQWFQAYGGEKIVLALDVNIDQSGNAMVATHGWQQASTHTLDDILNRYLDLGCRHVLCTDISKDGTMTGTNVELYKRYKQLYPQVVWQASGGVSCLDDLKDLKAVNCDSVILGKSLLTGAFTMQEALACWQNA.

Residue Asp-7 is the Proton acceptor of the active site. Asp-129 serves as the catalytic Proton donor.

Belongs to the HisA/HisF family.

The protein localises to the cytoplasm. The enzyme catalyses 1-(5-phospho-beta-D-ribosyl)-5-[(5-phospho-beta-D-ribosylamino)methylideneamino]imidazole-4-carboxamide = 5-[(5-phospho-1-deoxy-D-ribulos-1-ylimino)methylamino]-1-(5-phospho-beta-D-ribosyl)imidazole-4-carboxamide. It participates in amino-acid biosynthesis; L-histidine biosynthesis; L-histidine from 5-phospho-alpha-D-ribose 1-diphosphate: step 4/9. This Idiomarina loihiensis (strain ATCC BAA-735 / DSM 15497 / L2-TR) protein is 1-(5-phosphoribosyl)-5-[(5-phosphoribosylamino)methylideneamino] imidazole-4-carboxamide isomerase.